Consider the following 538-residue polypeptide: MAARRVSSLLSRSFSASSPLLFRSQGRNCYNGGILRRFGTSSAAAEEIINPSVQVSHTQLLINGNFVDSASGKTFPTLDPRTGEVIAHVAEGDAEDINRAVKAARTAFDEGPWPKMSAYERSRVLLRFADLVEKHSEELASLETWDNGKPYQQSLTAEIPMFARLFRYYAGWADKIHGLTIPADGNYQVHTLHEPIGVAGQIIPWNFPLLMFAWKVGPALACGNTIVLKTAEQTPLTAFYAGKLFLEAGLPPGVLNIVSGFGATAGAALASHMDVDKLAFTGSTDTGKVILGLAANSNLKPVTLELGGKSPFIVFEDADIDKAVELAHFALFFNQGQCCCAGSRTFVHEKVYDEFVEKSKARALKRVVGDPFRKGIEQGPQIDLKQFEKVMKYIKSGIESNATLECGGDQIGDKGYFIQPTVFSNVKDDMLIAQDEIFGPVQSILKFSDVDEVIKRANETKYGLAAGVFTKNLDTANRVSRALKAGTVWVNCFDVFDAAIPFGGYKMSGNGREKGIYSLNNYLQIKAVVTALNKPAWI.

A mitochondrion-targeting transit peptide spans 1–38 (MAARRVSSLLSRSFSASSPLLFRSQGRNCYNGGILRRF). 282–287 (GSTDTG) is a binding site for NAD(+). The active-site Proton acceptor is E305. C339 functions as the Nucleophile in the catalytic mechanism.

The protein belongs to the aldehyde dehydrogenase family. Homotetramer.

It localises to the mitochondrion matrix. It carries out the reaction an aldehyde + NAD(+) + H2O = a carboxylate + NADH + 2 H(+). In terms of biological role, possesses activity on acetaldehyde and glycolaldehyde in vitro. This chain is Aldehyde dehydrogenase family 2 member B4, mitochondrial (ALDH2B4), found in Arabidopsis thaliana (Mouse-ear cress).